A 404-amino-acid chain; its full sequence is Probable mannosyltransferase KTR3 (404 aa).

At methionine 1–serine 27 the chain is on the cytoplasmic side. The helical; Signal-anchor for type II membrane protein transmembrane segment at phenylalanine 28–serine 44 threads the bilayer. Positions arginine 45–glycine 83 are stem region. Residues arginine 45–isoleucine 404 lie on the Lumenal side of the membrane. The catalytic stretch occupies residues lysine 84–isoleucine 404. Glutamate 295 functions as the Nucleophile in the catalytic mechanism.

This sequence belongs to the glycosyltransferase 15 family. Interacts with SVP26.

The protein localises to the membrane. Its function is as follows. Possible glycosyltransferase that transfers an alpha-D-mannosyl residue from GDP-mannose into lipid-linked oligosaccharide, forming an alpha-(1-&gt;2)-D-mannosyl-D-mannose linkage. The protein is Probable mannosyltransferase KTR3 (KTR3) of Saccharomyces cerevisiae (strain ATCC 204508 / S288c) (Baker's yeast).